We begin with the raw amino-acid sequence, 666 residues long: Putative L-type lectin-domain containing receptor kinase V.1 (666 aa).

The signal sequence occupies residues 1 to 18 (MVLLLFLVLFFVPESVVC). At 19-289 (QRPNPNGVEF…WIQSPNGILT (271 aa)) the chain is on the extracellular side. Residues 27–257 (EFNTSGNMYT…SHYILGWTFK (231 aa)) form a legume-lectin like region. N-linked (GlcNAc...) asparagine glycans are attached at residues Asn-29, Asn-74, Asn-123, Asn-176, Asn-204, and Asn-259. Residues 290-310 (ISLTVSGVIILIILSLSLWLF) form a helical membrane-spanning segment. The Cytoplasmic portion of the chain corresponds to 311–666 (LKRKKLLEVL…FTESFVSHGR (356 aa)). The Protein kinase domain occupies 344-625 (FKDTEVLGKG…SVAQLPHNLL (282 aa)). ATP is bound by residues 350–358 (LGKGGFGKV) and Lys-373. Asp-469 (proton acceptor) is an active-site residue.

It in the C-terminal section; belongs to the protein kinase superfamily. Ser/Thr protein kinase family. In the N-terminal section; belongs to the leguminous lectin family.

It is found in the cell membrane. It catalyses the reaction L-seryl-[protein] + ATP = O-phospho-L-seryl-[protein] + ADP + H(+). It carries out the reaction L-threonyl-[protein] + ATP = O-phospho-L-threonyl-[protein] + ADP + H(+). In Arabidopsis thaliana (Mouse-ear cress), this protein is Putative L-type lectin-domain containing receptor kinase V.1 (LECRK51).